The sequence spans 370 residues: 3-isopropylmalate dehydrogenase 2 (370 aa).

77 to 90 (GPKWDAVPYEVRPE) is a binding site for NAD(+). R97, R107, R135, and D226 together coordinate substrate. Mg(2+) contacts are provided by D226, D250, and D254. 290-302 (GSAPDIAGKGLAN) provides a ligand contact to NAD(+).

This sequence belongs to the isocitrate and isopropylmalate dehydrogenases family. LeuB type 1 subfamily. Homodimer. The cofactor is Mg(2+). Mn(2+) serves as cofactor.

The protein resides in the cytoplasm. It catalyses the reaction (2R,3S)-3-isopropylmalate + NAD(+) = 4-methyl-2-oxopentanoate + CO2 + NADH. It participates in amino-acid biosynthesis; L-leucine biosynthesis; L-leucine from 3-methyl-2-oxobutanoate: step 3/4. Its function is as follows. Catalyzes the oxidation of 3-carboxy-2-hydroxy-4-methylpentanoate (3-isopropylmalate) to 3-carboxy-4-methyl-2-oxopentanoate. The product decarboxylates to 4-methyl-2 oxopentanoate. The polypeptide is 3-isopropylmalate dehydrogenase 2 (Bradyrhizobium diazoefficiens (strain JCM 10833 / BCRC 13528 / IAM 13628 / NBRC 14792 / USDA 110)).